Here is a 231-residue protein sequence, read N- to C-terminus: 2-C-methyl-D-erythritol 4-phosphate cytidylyltransferase (231 aa).

This sequence belongs to the IspD/TarI cytidylyltransferase family. IspD subfamily.

It catalyses the reaction 2-C-methyl-D-erythritol 4-phosphate + CTP + H(+) = 4-CDP-2-C-methyl-D-erythritol + diphosphate. It participates in isoprenoid biosynthesis; isopentenyl diphosphate biosynthesis via DXP pathway; isopentenyl diphosphate from 1-deoxy-D-xylulose 5-phosphate: step 2/6. In terms of biological role, catalyzes the formation of 4-diphosphocytidyl-2-C-methyl-D-erythritol from CTP and 2-C-methyl-D-erythritol 4-phosphate (MEP). This chain is 2-C-methyl-D-erythritol 4-phosphate cytidylyltransferase, found in Dictyoglomus thermophilum (strain ATCC 35947 / DSM 3960 / H-6-12).